We begin with the raw amino-acid sequence, 332 residues long: Glycerol-3-phosphate dehydrogenase [NAD(P)+] (332 aa).

3 residues coordinate NADPH: Trp11, Arg30, and Lys108. Lys108, Gly137, and Ser139 together coordinate sn-glycerol 3-phosphate. Ala141 is an NADPH binding site. Positions 192, 245, 255, 256, and 257 each coordinate sn-glycerol 3-phosphate. Lys192 (proton acceptor) is an active-site residue. Arg256 contacts NADPH. Residues Val280 and Glu282 each contribute to the NADPH site.

The protein belongs to the NAD-dependent glycerol-3-phosphate dehydrogenase family.

It localises to the cytoplasm. It carries out the reaction sn-glycerol 3-phosphate + NAD(+) = dihydroxyacetone phosphate + NADH + H(+). It catalyses the reaction sn-glycerol 3-phosphate + NADP(+) = dihydroxyacetone phosphate + NADPH + H(+). It functions in the pathway membrane lipid metabolism; glycerophospholipid metabolism. Its function is as follows. Catalyzes the reduction of the glycolytic intermediate dihydroxyacetone phosphate (DHAP) to sn-glycerol 3-phosphate (G3P), the key precursor for phospholipid synthesis. This chain is Glycerol-3-phosphate dehydrogenase [NAD(P)+], found in Burkholderia mallei (strain ATCC 23344).